The chain runs to 620 residues: Chaperone protein HtpG (620 aa).

Residues 1 to 334 (MTTTDTAPQS…SEDLPLNLSR (334 aa)) form an a; substrate-binding region. The tract at residues 335-548 (EMLQNNPQLA…GLGPDRALER (214 aa)) is b. Residues 549-620 (MLAQQNRGAA…RLNRLVLRAL (72 aa)) are c.

The protein belongs to the heat shock protein 90 family. Homodimer.

The protein localises to the cytoplasm. Functionally, molecular chaperone. Has ATPase activity. The chain is Chaperone protein HtpG from Rhodopseudomonas palustris (strain BisB18).